The sequence spans 112 residues: uncharacterized protein (112 aa).

Residues Met1–Leu21 constitute a mitochondrion transit peptide.

The protein resides in the mitochondrion. This is an uncharacterized protein from Saccharomyces cerevisiae (strain ATCC 204508 / S288c) (Baker's yeast).